The following is a 538-amino-acid chain: Chaperonin GroEL (538 aa).

ATP contacts are provided by residues 30–33, 87–91, G415, 479–481, and D495; these read TLGP, DGTTT, and DAA.

Belongs to the chaperonin (HSP60) family. Forms a cylinder of 14 subunits composed of two heptameric rings stacked back-to-back. Interacts with the co-chaperonin GroES.

The protein localises to the cytoplasm. It catalyses the reaction ATP + H2O + a folded polypeptide = ADP + phosphate + an unfolded polypeptide.. Functionally, together with its co-chaperonin GroES, plays an essential role in assisting protein folding. The GroEL-GroES system forms a nano-cage that allows encapsulation of the non-native substrate proteins and provides a physical environment optimized to promote and accelerate protein folding. In Dictyoglomus thermophilum (strain ATCC 35947 / DSM 3960 / H-6-12), this protein is Chaperonin GroEL.